We begin with the raw amino-acid sequence, 324 residues long: ATP synthase subunit a 2 (324 aa).

A signal peptide spans 1-33; sequence MKRVNVFRSGVFSRLFALLLPFLLGINGLVYAS. The next 6 membrane-spanning stretches (helical) occupy residues 95–115, 157–177, 179–199, 224–244, 257–277, and 291–311; these read HVVMMWIASAILLVVFLLVGN, LPYLLTVFAFILLLNLLGLVP, GATATGNINVTLTLAVFTFFI, ALWIIMIPIEIIGLFTKPFAL, IVILSLIFISFILKSYIVAMF, and IFVAFLQAFIFTMLSALFIGL.

Belongs to the ATPase A chain family. F-type ATPases have 2 components, CF(1) - the catalytic core - and CF(0) - the membrane proton channel. CF(1) has five subunits: alpha(3), beta(3), gamma(1), delta(1), epsilon(1). CF(0) has four main subunits: a, b, b' and c.

Its subcellular location is the cell inner membrane. Functionally, key component of the proton channel; it plays a direct role in the translocation of protons across the membrane. The sequence is that of ATP synthase subunit a 2 from Prosthecochloris aestuarii (strain DSM 271 / SK 413).